A 152-amino-acid chain; its full sequence is Pertussis toxin subunit 4 (152 aa).

A signal peptide spans 1–42; sequence MLRRFPTRTTAPGQGGARRSRVRALAWLLASGAMTHLSPALA. 2 cysteine pairs are disulfide-bonded: Cys-73–Cys-93 and Cys-145–Cys-151.

Pertussis toxin contains five different chains, S1-S5. They are organized into 2 functional subunits: A, composed of S1 (which is toxic) and B, containing S2, S3, S5, and two copies of S4 (B binds to the membrane receptors). Dimers of S2-S4 and S3-S4 are held together by S5.

The protein localises to the secreted. Its subcellular location is the host cell membrane. PTX oligomer B binds to receptors on the eukaryotic cell surface and facilitates the translocation of the toxic subunit across the cell membrane. This Bordetella parapertussis (strain 12822 / ATCC BAA-587 / NCTC 13253) protein is Pertussis toxin subunit 4 (ptxD).